Reading from the N-terminus, the 1122-residue chain is TSET complex member tstF (1122 aa).

The segment covering S88–N126 has biased composition (low complexity). Disordered stretches follow at residues S88–G131 and Q178–S215. Over residues Q178–K190 the composition is skewed to polar residues. The segment covering L191 to S215 has biased composition (low complexity). WD repeat units lie at residues F298–Q337, P342–Q381, and S383–K422. A disordered region spans residues N731–P775.

Component of the TSET complex, a heterohexamer composed of tstA, tstB, tstC, tstD, tstE and tstF, which may act in plasma membrane turnover. tstA, tstB, tstC and tstD are likely to be the core complex members with tstE and tstF acting as associated scaffold proteins.

This chain is TSET complex member tstF, found in Dictyostelium discoideum (Social amoeba).